The sequence spans 138 residues: MLKEIKNDYDKIREKMTQKIQELNQQITQIKKQIQIIEQNNLSDQQNQTIQKIKRQIYSIEFDILRVESNRSNMIYSKTFEDMCEYLDSHSGIGRIFAESFMREIEKNIQLMKQLVMMEDQIIKIKQEIRMIEKDLKI.

This is an uncharacterized protein from Methanocaldococcus jannaschii (strain ATCC 43067 / DSM 2661 / JAL-1 / JCM 10045 / NBRC 100440) (Methanococcus jannaschii).